The chain runs to 149 residues: Arginine regulator (149 aa).

The protein belongs to the ArgR family.

The protein localises to the cytoplasm. Its pathway is amino-acid degradation; L-arginine degradation via ADI pathway. Regulates the transcription of the arc operon, involved in arginine catabolism. In Bacillus cereus (strain ATCC 14579 / DSM 31 / CCUG 7414 / JCM 2152 / NBRC 15305 / NCIMB 9373 / NCTC 2599 / NRRL B-3711), this protein is Arginine regulator (argR1).